We begin with the raw amino-acid sequence, 603 residues long: Thread biopolymer filament subunit gamma (603 aa).

A head region spans residues 1 to 191; it reads MASHSSVSYR…ENETMEEELK (191 aa). An IF rod domain is found at 158-476; sequence VKNILGTLNQ…KLLEGQELMV (319 aa). Residues 193–227 form a coil 1A region; it reads LTGGVPMSPDSTVNLENVETQVTEMLTEVSNLTLE. The tract at residues 228–240 is linker 1; it reads RVRLEIDVDHLRA. The tract at residues 241-341 is coil 1B; the sequence is TADEIKSKYE…DALNVMREEY (101 aa). The tract at residues 342 to 362 is linker 12; the sequence is QQVVTKNVQEAETYCKMQIDQ. Positions 363–381 are coil 2A; that stretch reads IQGISTQTTEQISILDKEI. The linker 2 stretch occupies residues 382–389; that stretch reads NTLEKELQ. The tract at residues 390-510 is coil 2B; sequence PLNVEYQRLL…SSVGYGASST (121 aa). The interval 511 to 603 is tail; the sequence is TLGAISGGYS…GHDSTIILQQ (93 aa). A compositionally biased stretch (low complexity) spans 562–587; sequence SSSGGHSMYSSSSMKRSSSKSASASA. Positions 562–603 are disordered; the sequence is SSSGGHSMYSSSSMKRSSSKSASASAGGYGTSGHDSTIILQQ.

This sequence belongs to the intermediate filament family. In terms of assembly, coiled-coil heterodimer of an alpha and a gamma subunit. Assemble into 10 nm filaments. Forms a massive, conical, intermediate filament biopolymer of approximately 60 cm.

The protein localises to the secreted. It localises to the extracellular space. Functionally, released extracellularly into seawater and provides physical and biological defense against invasive organism by modulation of the viscoelastic properties of mucus. This Eptatretus stoutii (Pacific hagfish) protein is Thread biopolymer filament subunit gamma.